The primary structure comprises 273 residues: MVRVGIDVGNTAIKVVTQASTAVEAAQPARTRGPQLRSISLRDPEWITKCIEHLQTLAEKVAACESRECESVCYDVRVASVNRGSAEPLVFALDEAFFQCIRVRFVTHEDVSMPIDVNFPERVGIDRLLGAEAAFRRHAAPLIVVDAGTTVTVDFVSAEGVFRGGAILPGLEMQTAALAAGTDALPKLDWASHRCREMPEGPGRDTVAAMRLGVLASVAGAVERLLRIYGGAATLVVTGGDAGCLVDALPAECDAVEEPHLVAQALLDLMLHE.

Residue 7–14 participates in ATP binding; the sequence is DVGNTAIK. Substrate contacts are provided by residues Phe119 and 124 to 127; that span reads GIDR. The active-site Proton acceptor is the Asp126. Asp146 is a binding site for K(+). ATP is bound at residue Thr149. Thr206 lines the substrate pocket.

The protein belongs to the type III pantothenate kinase family. Homodimer. NH4(+) serves as cofactor. Requires K(+) as cofactor.

It is found in the cytoplasm. It catalyses the reaction (R)-pantothenate + ATP = (R)-4'-phosphopantothenate + ADP + H(+). It functions in the pathway cofactor biosynthesis; coenzyme A biosynthesis; CoA from (R)-pantothenate: step 1/5. In terms of biological role, catalyzes the phosphorylation of pantothenate (Pan), the first step in CoA biosynthesis. This Rhodopirellula baltica (strain DSM 10527 / NCIMB 13988 / SH1) protein is Type III pantothenate kinase.